A 424-amino-acid polypeptide reads, in one-letter code: Glutamyl-tRNA reductase (424 aa).

Substrate contacts are provided by residues 53 to 56 (TCNR), S111, 116 to 118 (EPQ), and Q122. C54 acts as the Nucleophile in catalysis. 191-196 (GAGEMI) is a binding site for NADP(+).

This sequence belongs to the glutamyl-tRNA reductase family. In terms of assembly, homodimer.

It carries out the reaction (S)-4-amino-5-oxopentanoate + tRNA(Glu) + NADP(+) = L-glutamyl-tRNA(Glu) + NADPH + H(+). It functions in the pathway porphyrin-containing compound metabolism; protoporphyrin-IX biosynthesis; 5-aminolevulinate from L-glutamyl-tRNA(Glu): step 1/2. Functionally, catalyzes the NADPH-dependent reduction of glutamyl-tRNA(Glu) to glutamate 1-semialdehyde (GSA). The chain is Glutamyl-tRNA reductase from Bordetella avium (strain 197N).